We begin with the raw amino-acid sequence, 664 residues long: DNA ligase (664 aa).

NAD(+) contacts are provided by residues 32-36 (DKEYD) and 80-81 (SL). The active-site N6-AMP-lysine intermediate is Lys-122. The NAD(+) site is built by Arg-144, Glu-178, and Lys-314. Residues Cys-407, Cys-410, Cys-423, and Cys-429 each coordinate Zn(2+). Positions 587–664 (IDENPFMDKT…NEEEFSNKIK (78 aa)) constitute a BRCT domain.

The protein belongs to the NAD-dependent DNA ligase family. LigA subfamily. The cofactor is Mg(2+). Mn(2+) is required as a cofactor.

The enzyme catalyses NAD(+) + (deoxyribonucleotide)n-3'-hydroxyl + 5'-phospho-(deoxyribonucleotide)m = (deoxyribonucleotide)n+m + AMP + beta-nicotinamide D-nucleotide.. Its function is as follows. DNA ligase that catalyzes the formation of phosphodiester linkages between 5'-phosphoryl and 3'-hydroxyl groups in double-stranded DNA using NAD as a coenzyme and as the energy source for the reaction. It is essential for DNA replication and repair of damaged DNA. The chain is DNA ligase from Clostridium botulinum (strain Langeland / NCTC 10281 / Type F).